Here is a 301-residue protein sequence, read N- to C-terminus: Pyridoxal 5'-phosphate synthase subunit PdxS (301 aa).

Residue Asp31 coordinates D-ribose 5-phosphate. The active-site Schiff-base intermediate with D-ribose 5-phosphate is the Lys88. Gly160 provides a ligand contact to D-ribose 5-phosphate. Lys172 contacts D-glyceraldehyde 3-phosphate. D-ribose 5-phosphate-binding positions include Gly221 and Gly242–Ser243.

This sequence belongs to the PdxS/SNZ family. As to quaternary structure, in the presence of PdxT, forms a dodecamer of heterodimers.

It carries out the reaction aldehydo-D-ribose 5-phosphate + D-glyceraldehyde 3-phosphate + L-glutamine = pyridoxal 5'-phosphate + L-glutamate + phosphate + 3 H2O + H(+). It functions in the pathway cofactor biosynthesis; pyridoxal 5'-phosphate biosynthesis. Catalyzes the formation of pyridoxal 5'-phosphate from ribose 5-phosphate (RBP), glyceraldehyde 3-phosphate (G3P) and ammonia. The ammonia is provided by the PdxT subunit. Can also use ribulose 5-phosphate and dihydroxyacetone phosphate as substrates, resulting from enzyme-catalyzed isomerization of RBP and G3P, respectively. The chain is Pyridoxal 5'-phosphate synthase subunit PdxS from Methanosarcina acetivorans (strain ATCC 35395 / DSM 2834 / JCM 12185 / C2A).